A 183-amino-acid chain; its full sequence is Putative 3-methyladenine DNA glycosylase (183 aa).

Belongs to the DNA glycosylase MPG family.

This is Putative 3-methyladenine DNA glycosylase from Wolbachia pipientis subsp. Culex pipiens (strain wPip).